The primary structure comprises 224 residues: Phosphoribosyltransferase domain-containing protein 1 (224 aa).

2 residues coordinate Mg(2+): glutamate 140 and aspartate 141. GMP contacts are provided by residues 140 to 148 (EDIINTGRT), lysine 172, 193 to 194 (FV), and aspartate 200. Position 200 (aspartate 200) interacts with Mg(2+).

This sequence belongs to the purine/pyrimidine phosphoribosyltransferase family.

This is Phosphoribosyltransferase domain-containing protein 1 (prtfdc1) from Xenopus tropicalis (Western clawed frog).